Here is a 156-residue protein sequence, read N- to C-terminus: ATP synthase subunit b (156 aa).

A helical transmembrane segment spans residues Ala-13–Ile-33.

The protein belongs to the ATPase B chain family. F-type ATPases have 2 components, F(1) - the catalytic core - and F(0) - the membrane proton channel. F(1) has five subunits: alpha(3), beta(3), gamma(1), delta(1), epsilon(1). F(0) has three main subunits: a(1), b(2) and c(10-14). The alpha and beta chains form an alternating ring which encloses part of the gamma chain. F(1) is attached to F(0) by a central stalk formed by the gamma and epsilon chains, while a peripheral stalk is formed by the delta and b chains.

Its subcellular location is the cell inner membrane. Functionally, f(1)F(0) ATP synthase produces ATP from ADP in the presence of a proton or sodium gradient. F-type ATPases consist of two structural domains, F(1) containing the extramembraneous catalytic core and F(0) containing the membrane proton channel, linked together by a central stalk and a peripheral stalk. During catalysis, ATP synthesis in the catalytic domain of F(1) is coupled via a rotary mechanism of the central stalk subunits to proton translocation. Its function is as follows. Component of the F(0) channel, it forms part of the peripheral stalk, linking F(1) to F(0). This is ATP synthase subunit b from Aeromonas salmonicida (strain A449).